The sequence spans 89 residues: Small ribosomal subunit protein uS14 (89 aa).

It belongs to the universal ribosomal protein uS14 family. As to quaternary structure, part of the 30S ribosomal subunit. Contacts proteins S3 and S10.

Its function is as follows. Binds 16S rRNA, required for the assembly of 30S particles and may also be responsible for determining the conformation of the 16S rRNA at the A site. In Pelodictyon phaeoclathratiforme (strain DSM 5477 / BU-1), this protein is Small ribosomal subunit protein uS14.